A 459-amino-acid polypeptide reads, in one-letter code: Putrescine aminotransferase (459 aa).

Residues glycine 150–threonine 151 and glutamine 274 each bind pyridoxal 5'-phosphate. Lysine 300 carries the N6-(pyridoxal phosphate)lysine modification. Threonine 332 provides a ligand contact to pyridoxal 5'-phosphate.

Belongs to the class-III pyridoxal-phosphate-dependent aminotransferase family. Putrescine aminotransferase subfamily. Requires pyridoxal 5'-phosphate as cofactor.

The catalysed reaction is an alkane-alpha,omega-diamine + 2-oxoglutarate = an omega-aminoaldehyde + L-glutamate. It catalyses the reaction putrescine + 2-oxoglutarate = 1-pyrroline + L-glutamate + H2O. It carries out the reaction cadaverine + 2-oxoglutarate = 5-aminopentanal + L-glutamate. It participates in amine and polyamine degradation; putrescine degradation; 4-aminobutanal from putrescine (transaminase route): step 1/1. Functionally, catalyzes the aminotransferase reaction from putrescine to 2-oxoglutarate, leading to glutamate and 4-aminobutanal, which spontaneously cyclizes to form 1-pyrroline. This is the first step in one of two pathways for putrescine degradation, where putrescine is converted into 4-aminobutanoate (gamma-aminobutyrate or GABA) via 4-aminobutanal. Also functions as a cadaverine transaminase in a a L-lysine degradation pathway to succinate that proceeds via cadaverine, glutarate and L-2-hydroxyglutarate. This Escherichia coli O6:H1 (strain CFT073 / ATCC 700928 / UPEC) protein is Putrescine aminotransferase.